A 482-amino-acid polypeptide reads, in one-letter code: tRNA sulfurtransferase (482 aa).

A THUMP domain is found at 61–165; that stretch reads LVIRDALTRI…DDRLLLIKGR (105 aa). ATP-binding positions include 183-184, Lys265, Gly287, and Gln296; that span reads LI. An intrachain disulfide couples Cys344 to Cys456. The Rhodanese domain occupies 404–482; sequence FGPNDVILDI…GFANVKVYRP (79 aa). Cys456 (cysteine persulfide intermediate) is an active-site residue.

The protein belongs to the ThiI family.

Its subcellular location is the cytoplasm. It carries out the reaction [ThiI sulfur-carrier protein]-S-sulfanyl-L-cysteine + a uridine in tRNA + 2 reduced [2Fe-2S]-[ferredoxin] + ATP + H(+) = [ThiI sulfur-carrier protein]-L-cysteine + a 4-thiouridine in tRNA + 2 oxidized [2Fe-2S]-[ferredoxin] + AMP + diphosphate. The enzyme catalyses [ThiS sulfur-carrier protein]-C-terminal Gly-Gly-AMP + S-sulfanyl-L-cysteinyl-[cysteine desulfurase] + AH2 = [ThiS sulfur-carrier protein]-C-terminal-Gly-aminoethanethioate + L-cysteinyl-[cysteine desulfurase] + A + AMP + 2 H(+). The protein operates within cofactor biosynthesis; thiamine diphosphate biosynthesis. Catalyzes the ATP-dependent transfer of a sulfur to tRNA to produce 4-thiouridine in position 8 of tRNAs, which functions as a near-UV photosensor. Also catalyzes the transfer of sulfur to the sulfur carrier protein ThiS, forming ThiS-thiocarboxylate. This is a step in the synthesis of thiazole, in the thiamine biosynthesis pathway. The sulfur is donated as persulfide by IscS. The sequence is that of tRNA sulfurtransferase from Salmonella typhimurium (strain LT2 / SGSC1412 / ATCC 700720).